A 134-amino-acid chain; its full sequence is Ribosome-binding factor A (134 aa).

It belongs to the RbfA family. As to quaternary structure, monomer. Binds 30S ribosomal subunits, but not 50S ribosomal subunits or 70S ribosomes.

It is found in the cytoplasm. Functionally, one of several proteins that assist in the late maturation steps of the functional core of the 30S ribosomal subunit. Associates with free 30S ribosomal subunits (but not with 30S subunits that are part of 70S ribosomes or polysomes). Required for efficient processing of 16S rRNA. May interact with the 5'-terminal helix region of 16S rRNA. This Rhizobium etli (strain CIAT 652) protein is Ribosome-binding factor A.